A 150-amino-acid chain; its full sequence is Con-Ins Im1 (150 aa).

Residues 1–25 (MATSLLSPLLVAMLGFLLHVHVARA) form the signal peptide. Intrachain disulfides connect Cys-31-Cys-133, Cys-46-Cys-136, Cys-58-Cys-149, and Cys-135-Cys-140. The propeptide at 64-111 (GYAGGQRQLRKRTSMIDSDDMEAEGGSRGGFLMSKRRALSYLQKETNP) is c peptide. Glu-144 carries the post-translational modification 4-carboxyglutamate; partial.

Belongs to the insulin family. Heterodimer of A and B chains; disulfide-linked. In terms of tissue distribution, expressed by the venom gland.

The protein resides in the secreted. This venom insulin facilitates prey capture by rapidly inducing hypoglycemic shock. Intraperitoneal injection of this peptide into zebrafish lowers blood glucose with the same potency than human insulin. In vivo, when applied to water, this peptide reduces overall locomotor activity of zebrafish larvae, observed as a significant decrease in the percentage of time spent swimming and movement frequency. This Conus imperialis (Imperial cone) protein is Con-Ins Im1.